A 297-amino-acid polypeptide reads, in one-letter code: tRNA dimethylallyltransferase (297 aa).

10–17 lines the ATP pocket; it reads GITASGKS. Position 12-17 (12-17) interacts with substrate; that stretch reads TASGKS. The tract at residues 36–39 is interaction with substrate tRNA; that stretch reads DSKQ.

Belongs to the IPP transferase family. As to quaternary structure, monomer. The cofactor is Mg(2+).

The enzyme catalyses adenosine(37) in tRNA + dimethylallyl diphosphate = N(6)-dimethylallyladenosine(37) in tRNA + diphosphate. In terms of biological role, catalyzes the transfer of a dimethylallyl group onto the adenine at position 37 in tRNAs that read codons beginning with uridine, leading to the formation of N6-(dimethylallyl)adenosine (i(6)A). The protein is tRNA dimethylallyltransferase of Wolbachia sp. subsp. Brugia malayi (strain TRS).